The sequence spans 261 residues: Early 31 kDa protein (261 aa).

The interval 230–261 (INKYSADTDEEEEEEEDNAEDTEEEEEEEADQ) is disordered. A compositionally biased stretch (acidic residues) spans 236–261 (DTDEEEEEEEDNAEDTEEEEEEEADQ).

This Frog virus 3 (isolate Goorha) (FV-3) protein is Early 31 kDa protein.